A 3230-amino-acid chain; its full sequence is Helicase SRCAP (3230 aa).

A disordered region spans residues methionine 1–leucine 71. Residues glycine 26–serine 41 show a composition bias toward low complexity. Residues leucine 124–serine 196 enclose the HSA domain. Disordered stretches follow at residues glutamine 253–aspartate 547 and glutamate 559–lysine 581. The span at serine 257–serine 273 shows a compositional bias: low complexity. The span at aspartate 283–aspartate 313 shows a compositional bias: acidic residues. The span at glutamate 315–glutamate 329 shows a compositional bias: basic and acidic residues. Over residues arginine 337–serine 356 the composition is skewed to low complexity. Residues aspartate 397–glycine 425 show a composition bias toward acidic residues. Residues glutamate 426 to glutamate 441 show a composition bias toward basic and acidic residues. Acidic residues-rich tracts occupy residues serine 462 to glutamine 490, arginine 503 to threonine 517, and glutamate 524 to aspartate 533. Residues valine 630–histidine 795 form the Helicase ATP-binding domain. Residue aspartate 643–threonine 650 coordinates ATP. Disordered regions lie at residues alanine 1017–leucine 1045, proline 1058–serine 1125, and threonine 1138–proline 1166. Pro residues-rich tracts occupy residues proline 1018–proline 1030 and proline 1058–glutamine 1076. Positions leucine 1093–lysine 1107 are enriched in low complexity. Pro residues predominate over residues proline 1108–glycine 1123. Residues threonine 1138–proline 1160 are compositionally biased toward low complexity. A Phosphoserine modification is found at serine 1172. Disordered stretches follow at residues glycine 1320–proline 1366, serine 1406–serine 1425, valine 1629–valine 1760, and serine 1839–arginine 1893. The segment covering proline 1323–serine 1336 has biased composition (pro residues). Residues glycine 1337–threonine 1360 show a composition bias toward low complexity. Over residues proline 1675–leucine 1691 the composition is skewed to low complexity. Polar residues predominate over residues glycine 1692 to serine 1733. Pro residues predominate over residues proline 1750–valine 1760. A Helicase C-terminal domain is found at lysine 2044–threonine 2197. 6 disordered regions span residues leucine 2214 to valine 2233, phenylalanine 2271 to alanine 2298, valine 2327 to alanine 2453, leucine 2564 to lysine 2583, lysine 2598 to serine 3081, and aspartate 3095 to threonine 3230. Positions glutamate 2215–alanine 2225 are enriched in low complexity. Basic and acidic residues-rich tracts occupy residues glutamate 2284–alanine 2298, valine 2327–glutamine 2358, and lysine 2386–arginine 2403. A compositionally biased stretch (pro residues) spans arginine 2438–alanine 2448. 2 stretches are compositionally biased toward low complexity: residues leucine 2564–leucine 2579 and leucine 2600–leucine 2611. Residues glutamate 2669 to glutamate 2679 show a composition bias toward basic and acidic residues. A compositionally biased stretch (low complexity) spans valine 2694–glutamate 2712. Residues serine 2782–arginine 2794 are compositionally biased toward polar residues. The segment covering glycine 2807–leucine 2817 has biased composition (low complexity). Positions valine 2856–arginine 2868 are enriched in basic residues. The segment at residues lysine 2857–serine 2869 is a DNA-binding region (a.T hook 1). A compositionally biased stretch (pro residues) spans isoleucine 2913–arginine 2926. A DNA-binding region (a.T hook 2) is located at residues lysine 2936–leucine 2948. Polar residues predominate over residues threonine 2953–arginine 2965. Residues glutamine 2967–leucine 2982 show a composition bias toward pro residues. Positions valine 2983–proline 3002 are enriched in low complexity. A DNA-binding region (a.T hook 3) is located at residues lysine 3004 to serine 3016. Residues proline 3011 to serine 3020 are compositionally biased toward pro residues. A compositionally biased stretch (low complexity) spans proline 3044–serine 3053. Over residues serine 3168–aspartate 3184 the composition is skewed to acidic residues.

It belongs to the SNF2/RAD54 helicase family. SWR1 subfamily. In terms of assembly, interacts with CREBBP and EP300. May be part of a complex containing SRCAP, CREBBP, CARM1 and GRIP1. Component of the chromatin-remodeling SRCAP complex composed of at least SRCAP, DMAP1, RUVBL1, RUVBL2, ACTL6A, YEATS4, VPS72, ACTR6 and ZNHIT1. Component of a NuA4-related complex which contains EP400, TRRAP/PAF400, SRCAP, BRD8/SMAP, EPC1, DMAP1/DNMAP1, RUVBL1/TIP49, RUVBL2, actin, ACTL6A/BAF53A, VPS72 and YEATS4/GAS41. As to quaternary structure, (Microbial infection) Interacts with hepatitis C virus (HCV) NS5A. (Microbial infection) Interacts with human adenovirus 2 DBP.

The protein resides in the nucleus. Its function is as follows. Catalytic component of the SRCAP complex which mediates the ATP-dependent exchange of histone H2AZ/H2B dimers for nucleosomal H2A/H2B, leading to transcriptional regulation of selected genes by chromatin remodeling. Acts as a coactivator for CREB-mediated transcription, steroid receptor-mediated transcription, and Notch-mediated transcription. The chain is Helicase SRCAP (SRCAP) from Homo sapiens (Human).